The following is a 428-amino-acid chain: MLDIRLFRNEPDTVKSKIELRGDDPKVVDEILELDEQRRKLISATEEMKARRNKVSEEIALKKRNKENADDVIAEMRTLGDDIKEKDSQLNEIDNKMTGILCRIPNLISDDVPQGESDEDNVEVKKWGTPREFSFEPKAHWDIVEELKMADFDRAAKVSGARFVYLTNEGAQLERALMNYMITKHTTQHGYTEMMVPQLVNADTMYGTGQLPKFEEDLFKVEKEGLYTIPTAEVPLTNFYRNEIIQPGVLPEKFTGQSACFRSEAGSAGRDTRGLIRLHQFDKVEMVRFEQPEDSWNALEEMTTNAEAILEELGLPYRRVILCTGDIGFSASKTYDLEVWLPSYNDYKEISSCSNCTDFQARRANIRFKRDKAAKPELAHTLNGSGLAVGRTFAAIVENYQNEDGTVTIPEALVPFMGGKTQISKPVK.

T231–E233 is an L-serine binding site. ATP is bound at residue R262–E264. Position 285 (E285) interacts with L-serine. E349–S352 is an ATP binding site. S385 provides a ligand contact to L-serine.

It belongs to the class-II aminoacyl-tRNA synthetase family. Type-1 seryl-tRNA synthetase subfamily. In terms of assembly, homodimer. The tRNA molecule binds across the dimer.

It is found in the cytoplasm. It carries out the reaction tRNA(Ser) + L-serine + ATP = L-seryl-tRNA(Ser) + AMP + diphosphate + H(+). The enzyme catalyses tRNA(Sec) + L-serine + ATP = L-seryl-tRNA(Sec) + AMP + diphosphate + H(+). The protein operates within aminoacyl-tRNA biosynthesis; selenocysteinyl-tRNA(Sec) biosynthesis; L-seryl-tRNA(Sec) from L-serine and tRNA(Sec): step 1/1. Functionally, catalyzes the attachment of serine to tRNA(Ser). Is also able to aminoacylate tRNA(Sec) with serine, to form the misacylated tRNA L-seryl-tRNA(Sec), which will be further converted into selenocysteinyl-tRNA(Sec). The protein is Serine--tRNA ligase of Staphylococcus aureus (strain USA300).